We begin with the raw amino-acid sequence, 530 residues long: Poly(U)-binding-splicing factor PUF60 (530 aa).

Positions 1–487 (MATATIALGT…EDAEIIVKIF (487 aa)) are inhibits homodimerization. Lys14 participates in a covalent cross-link: Glycyl lysine isopeptide (Lys-Gly) (interchain with G-Cter in SUMO2). At Thr31 the chain carries Phosphothreonine. The segment at 48-530 (QSIKSVLVKQ…ERFDNSDLSA (483 aa)) is inhibits transcriptional repression, interaction with ERCC3 and apoptosis induction. Residue Lys51 forms a Glycyl lysine isopeptide (Lys-Gly) (interchain with G-Cter in SUMO2) linkage. Ser83 is modified (phosphoserine). RRM domains lie at 100–178 (CRVY…RPSN) and 197–275 (NRIY…KAVT). Phosphoserine is present on Ser215. Lys222 is subject to N6-acetyllysine. The residue at position 285 (Thr285) is a Phosphothreonine. Positions 387-408 (KKEKEEEELFPESERPEMLSEQ) are disordered. A Glycyl lysine isopeptide (Lys-Gly) (interchain with G-Cter in SUMO2) cross-link involves residue Lys390. The span at 398-408 (ESERPEMLSEQ) shows a compositional bias: basic and acidic residues. Lys425 carries the post-translational modification N6-acetyllysine. Lys429 is covalently cross-linked (Glycyl lysine isopeptide (Lys-Gly) (interchain with G-Cter in SUMO2)). In terms of domain architecture, RRM 3; atypical spans 433–520 (TVMVLRNMVD…RKVVAEVYDQ (88 aa)).

It belongs to the RRM half pint family. Homodimer. Associates with the spliceosome. Found in a complex with RO60 and Y5 RNA. Found in a complex with FUBP1 and far upstream element (FUSE) DNA segment. Interacts directly with ERCC3. Interacts with CDK7 and GTF2H1. Interacts with SRSF11/P54. Interacts with ARGLU1; interaction may be involved in ARGLU1-mediated modulation of alternative splicing.

The protein resides in the nucleus. In terms of biological role, DNA- and RNA-binding protein, involved in several nuclear processes such as pre-mRNA splicing, apoptosis and transcription regulation. In association with FUBP1 regulates MYC transcription at the P2 promoter through the core-TFIIH basal transcription factor. Acts as a transcriptional repressor through the core-TFIIH basal transcription factor. Represses FUBP1-induced transcriptional activation but not basal transcription. Decreases ERCC3 helicase activity. Is also involved in pre-mRNA splicing. Promotes splicing of an intron with weak 3'-splice site and pyrimidine tract in a cooperative manner with U2AF2. Involved in apoptosis induction when overexpressed in HeLa cells. Modulates alternative splicing of several mRNAs. Binds to relaxed DNA of active promoter regions. Binds to the pyrimidine tract and 3'-splice site regions of pre-mRNA; binding is enhanced in presence of U2AF2. Binds to Y5 RNA in association with RO60. Binds to poly(U) RNA. This is Poly(U)-binding-splicing factor PUF60 from Bos taurus (Bovine).